The primary structure comprises 124 residues: Large ribosomal subunit protein bL12 (124 aa).

Belongs to the bacterial ribosomal protein bL12 family. In terms of assembly, homodimer. Part of the ribosomal stalk of the 50S ribosomal subunit. Forms a multimeric L10(L12)X complex, where L10 forms an elongated spine to which 2 to 4 L12 dimers bind in a sequential fashion. Binds GTP-bound translation factors.

Forms part of the ribosomal stalk which helps the ribosome interact with GTP-bound translation factors. Is thus essential for accurate translation. In Phocaeicola vulgatus (strain ATCC 8482 / DSM 1447 / JCM 5826 / CCUG 4940 / NBRC 14291 / NCTC 11154) (Bacteroides vulgatus), this protein is Large ribosomal subunit protein bL12.